We begin with the raw amino-acid sequence, 143 residues long: Transcriptional regulator MraZ (143 aa).

SpoVT-AbrB domains follow at residues glutamate 5–glutamate 47 and alanine 76–arginine 119.

This sequence belongs to the MraZ family. In terms of assembly, forms oligomers.

The protein resides in the cytoplasm. The protein localises to the nucleoid. The protein is Transcriptional regulator MraZ of Pediococcus pentosaceus (strain ATCC 25745 / CCUG 21536 / LMG 10740 / 183-1w).